Reading from the N-terminus, the 300-residue chain is NAD kinase (300 aa).

The Proton acceptor role is filled by Asp-75. NAD(+) contacts are provided by residues 75–76, 149–150, Arg-177, Asp-179, 190–195, Ala-214, and Gln-248; these read DG, ND, and TAYALS.

It belongs to the NAD kinase family. A divalent metal cation is required as a cofactor.

Its subcellular location is the cytoplasm. It catalyses the reaction NAD(+) + ATP = ADP + NADP(+) + H(+). Functionally, involved in the regulation of the intracellular balance of NAD and NADP, and is a key enzyme in the biosynthesis of NADP. Catalyzes specifically the phosphorylation on 2'-hydroxyl of the adenosine moiety of NAD to yield NADP. The polypeptide is NAD kinase (Burkholderia cenocepacia (strain ATCC BAA-245 / DSM 16553 / LMG 16656 / NCTC 13227 / J2315 / CF5610) (Burkholderia cepacia (strain J2315))).